Reading from the N-terminus, the 329-residue chain is GTP 3',8-cyclase (329 aa).

The Radical SAM core domain occupies 1 to 229; the sequence is MNPVDYLRIS…ESTIKGNGPA (229 aa). Arg-8 provides a ligand contact to GTP. Positions 15 and 19 each coordinate [4Fe-4S] cluster. An S-adenosyl-L-methionine-binding site is contributed by Tyr-21. Cys-22 provides a ligand contact to [4Fe-4S] cluster. Arg-60 is a binding site for GTP. Residue Gly-64 participates in S-adenosyl-L-methionine binding. Thr-91 is a binding site for GTP. Ser-115 provides a ligand contact to S-adenosyl-L-methionine. A GTP-binding site is contributed by Lys-155. Met-189 is an S-adenosyl-L-methionine binding site. [4Fe-4S] cluster is bound by residues Cys-252 and Cys-255. Position 257–259 (257–259) interacts with GTP; that stretch reads RMR. Cys-269 is a binding site for [4Fe-4S] cluster.

It belongs to the radical SAM superfamily. MoaA family. Monomer and homodimer. [4Fe-4S] cluster is required as a cofactor.

It catalyses the reaction GTP + AH2 + S-adenosyl-L-methionine = (8S)-3',8-cyclo-7,8-dihydroguanosine 5'-triphosphate + 5'-deoxyadenosine + L-methionine + A + H(+). Its pathway is cofactor biosynthesis; molybdopterin biosynthesis. Functionally, catalyzes the cyclization of GTP to (8S)-3',8-cyclo-7,8-dihydroguanosine 5'-triphosphate. The sequence is that of GTP 3',8-cyclase from Rippkaea orientalis (strain PCC 8801 / RF-1) (Cyanothece sp. (strain PCC 8801)).